Consider the following 866-residue polypeptide: Leucine--tRNA ligase (866 aa).

Residues 59–69 carry the 'HIGH' region motif; that stretch reads PYPSGDLHMGH. The tract at residues 393–421 is disordered; that stretch reads VPVIKTDPQTGEPLLPESAPLESPAETGQ. Residues 404–418 show a composition bias toward low complexity; it reads EPLLPESAPLESPAE. The short motif at 628–632 is the 'KMSKS' region element; that stretch reads AMSKS. Lys-631 is an ATP binding site.

Belongs to the class-I aminoacyl-tRNA synthetase family.

The protein localises to the cytoplasm. The catalysed reaction is tRNA(Leu) + L-leucine + ATP = L-leucyl-tRNA(Leu) + AMP + diphosphate. The polypeptide is Leucine--tRNA ligase (Leifsonia xyli subsp. xyli (strain CTCB07)).